Consider the following 275-residue polypeptide: Large ribosomal subunit protein uL2 (275 aa).

Residues 224-275 (AMNPVDHPHGGGEGKAPIGHPGPLTPWGKPALGYKTRKKGKASDKFIVKRRK) are disordered. Residues 264-275 (KASDKFIVKRRK) are compositionally biased toward basic and acidic residues.

It belongs to the universal ribosomal protein uL2 family. Part of the 50S ribosomal subunit. Forms a bridge to the 30S subunit in the 70S ribosome.

One of the primary rRNA binding proteins. Required for association of the 30S and 50S subunits to form the 70S ribosome, for tRNA binding and peptide bond formation. It has been suggested to have peptidyltransferase activity; this is somewhat controversial. Makes several contacts with the 16S rRNA in the 70S ribosome. The protein is Large ribosomal subunit protein uL2 of Caldanaerobacter subterraneus subsp. tengcongensis (strain DSM 15242 / JCM 11007 / NBRC 100824 / MB4) (Thermoanaerobacter tengcongensis).